A 446-amino-acid chain; its full sequence is tRNA modification GTPase MnmE (446 aa).

3 residues coordinate (6S)-5-formyl-5,6,7,8-tetrahydrofolate: arginine 23, glutamate 81, and lysine 120. In terms of domain architecture, TrmE-type G spans 216 to 370; the sequence is GFKVAIIGKP…LIKELELILD (155 aa). Residue asparagine 226 coordinates K(+). GTP contacts are provided by residues 226-231, 245-251, and 270-273; these read NVGKSS, SDIAGTT, and DTAG. Serine 230 provides a ligand contact to Mg(2+). K(+) contacts are provided by serine 245, isoleucine 247, and threonine 250. Position 251 (threonine 251) interacts with Mg(2+). Lysine 446 is a (6S)-5-formyl-5,6,7,8-tetrahydrofolate binding site.

This sequence belongs to the TRAFAC class TrmE-Era-EngA-EngB-Septin-like GTPase superfamily. TrmE GTPase family. In terms of assembly, homodimer. Heterotetramer of two MnmE and two MnmG subunits. Requires K(+) as cofactor.

It localises to the cytoplasm. Exhibits a very high intrinsic GTPase hydrolysis rate. Involved in the addition of a carboxymethylaminomethyl (cmnm) group at the wobble position (U34) of certain tRNAs, forming tRNA-cmnm(5)s(2)U34. The sequence is that of tRNA modification GTPase MnmE from Aliarcobacter butzleri (strain RM4018) (Arcobacter butzleri).